We begin with the raw amino-acid sequence, 188 residues long: UPF0200 protein YG5714_1176 (188 aa).

15 to 22 (GMPGSGKS) is a binding site for ATP.

The protein belongs to the UPF0200 family.

The protein is UPF0200 protein YG5714_1176 of Saccharolobus islandicus (strain Y.G.57.14 / Yellowstone #1) (Sulfolobus islandicus).